A 1521-amino-acid polypeptide reads, in one-letter code: uncharacterized protein (1521 aa).

5 disordered regions span residues 1–20 (MENNNGNSVINKSNDKNSNN), 85–124 (TFQSPPQPINTSSTQTNYNNQNNPNPNPNPSPNPNSNNNN), 218–254 (ASSPSTPSTPSSSSRSQQQQQQQQQQSSSSSLSSSSS), 431–482 (VLNS…TGIT), and 735–797 (NNNN…HQQQ). 3 stretches are compositionally biased toward low complexity: residues 94–108 (NTSSTQTNYNNQNNP), 219–254 (SSPSTPSTPSSSSRSQQQQQQQQQQSSSSSLSSSSS), and 431–454 (VLNSNSNSSSGGASSSSGGSNNTS). Over residues 455 to 464 (PAIVTSASIH) the composition is skewed to polar residues. Composition is skewed to low complexity over residues 465-482 (NSNGNSNENEIEKSTGIT) and 735-762 (NNNNNNNNNNNNNNNNNNNNNNNNNNIL). Residues 763-774 (SNTLTSSLINEP) show a composition bias toward polar residues. Residues 775–788 (NQQHQHQQHQQQNQ) show a composition bias toward low complexity. The stretch at 853-903 (IVNSQQQQQQQQQQQQQQQQQQQQQQQQQQQQQQQQQQQQQQHNNTQNINN) forms a coiled coil. Over residues 1398-1453 (QQPLPTSKTSSSSSSTSSEATPYLSSSVPPSIVTSTPSTTPMISSSNPNTSSLPTS) the composition is skewed to low complexity. The interval 1398 to 1455 (QQPLPTSKTSSSSSSTSSEATPYLSSSVPPSIVTSTPSTTPMISSSNPNTSSLPTSER) is disordered.

This is an uncharacterized protein from Dictyostelium discoideum (Social amoeba).